The primary structure comprises 478 residues: Protein nucleotidyltransferase YdiU (478 aa).

Residues Gly84, Gly86, Arg87, Lys107, Asp119, Gly120, Arg170, and Arg177 each contribute to the ATP site. Asp246 acts as the Proton acceptor in catalysis. Residues Asn247 and Asp256 each coordinate Mg(2+). Position 256 (Asp256) interacts with ATP.

This sequence belongs to the SELO family. It depends on Mg(2+) as a cofactor. Mn(2+) is required as a cofactor.

It carries out the reaction L-seryl-[protein] + ATP = 3-O-(5'-adenylyl)-L-seryl-[protein] + diphosphate. The catalysed reaction is L-threonyl-[protein] + ATP = 3-O-(5'-adenylyl)-L-threonyl-[protein] + diphosphate. It catalyses the reaction L-tyrosyl-[protein] + ATP = O-(5'-adenylyl)-L-tyrosyl-[protein] + diphosphate. The enzyme catalyses L-histidyl-[protein] + UTP = N(tele)-(5'-uridylyl)-L-histidyl-[protein] + diphosphate. It carries out the reaction L-seryl-[protein] + UTP = O-(5'-uridylyl)-L-seryl-[protein] + diphosphate. The catalysed reaction is L-tyrosyl-[protein] + UTP = O-(5'-uridylyl)-L-tyrosyl-[protein] + diphosphate. Nucleotidyltransferase involved in the post-translational modification of proteins. It can catalyze the addition of adenosine monophosphate (AMP) or uridine monophosphate (UMP) to a protein, resulting in modifications known as AMPylation and UMPylation. This is Protein nucleotidyltransferase YdiU from Escherichia coli O81 (strain ED1a).